Consider the following 899-residue polypeptide: Linoleate 13S-lipoxygenase 2-1, chloroplastic (899 aa).

The transit peptide at 1-40 (MLKPQLQQSSQSTKALIPSWNTNPLFLASFPINILNKNFR) directs the protein to the chloroplast. In terms of domain architecture, PLAT spans 78-200 (VQKQVNLNLS…DNPDKRIFFT (123 aa)). Residues 203–899 (SYLPSQTPSG…GKGVPYSISI (697 aa)) form the Lipoxygenase domain. Residues 252 to 287 (SNNDDAKRPVLGGKELPYPRRCKTGRPRSKKDPLSE) form a disordered region. Residues 271 to 280 (RRCKTGRPRS) show a composition bias toward basic residues. Fe cation-binding residues include His557, His562, His749, Asn753, and Ile899.

This sequence belongs to the lipoxygenase family. As to quaternary structure, monomer. The cofactor is Fe cation. In terms of tissue distribution, expressed in leaves and floral buds.

It localises to the plastid. The protein localises to the chloroplast stroma. Its subcellular location is the chloroplast thylakoid. The enzyme catalyses (9Z,12Z)-octadecadienoate + O2 = (13S)-hydroperoxy-(9Z,11E)-octadecadienoate. The catalysed reaction is (9Z,12Z,15Z)-octadecatrienoate + O2 = (13S)-hydroperoxy-(9Z,11E,15Z)-octadecatrienoate. It functions in the pathway lipid metabolism; oxylipin biosynthesis. Functionally, plant lipoxygenase involved in a number of diverse aspects of plant physiology including growth and development, pest resistance, and senescence. May not be involved in the bulk production of jasmonate upon wounding. Catalyzes the hydroperoxidation of lipids containing a cis,cis-1,4-pentadiene structure. Linolenic acid is the preferred substrate, before linoleic and arachidonic acids. Also has some activity with phosphatidylglycerol, but not with galactolipids. The polypeptide is Linoleate 13S-lipoxygenase 2-1, chloroplastic (Solanum tuberosum (Potato)).